The sequence spans 292 residues: Acetylglutamate kinase (292 aa).

Residues 64-65 (GG), R86, and N190 each bind substrate.

It belongs to the acetylglutamate kinase family. ArgB subfamily.

Its subcellular location is the cytoplasm. The catalysed reaction is N-acetyl-L-glutamate + ATP = N-acetyl-L-glutamyl 5-phosphate + ADP. It functions in the pathway amino-acid biosynthesis; L-arginine biosynthesis; N(2)-acetyl-L-ornithine from L-glutamate: step 2/4. In terms of biological role, catalyzes the ATP-dependent phosphorylation of N-acetyl-L-glutamate. The sequence is that of Acetylglutamate kinase from Pelobacter propionicus (strain DSM 2379 / NBRC 103807 / OttBd1).